Reading from the N-terminus, the 366-residue chain is E3 ubiquitin-protein ligase SINA-like 1 (366 aa).

Positions 1 to 37 are disordered; that stretch reads MVKGTNAEQALAREEASSSRPKRQRVPSIVEEEGENG. Residues 56–92 form an RING-type; degenerate zinc finger; the sequence is CPICCNALTIPIFQCDKGHIACSSCCTNVSNKCPYCS. The segment at 106–354 is SBD; it reads VVEAFIVRCP…KGTYICIRSL (249 aa). The SIAH-type; degenerate zinc finger occupies 109–232; the sequence is AFIVRCPIVA…LYSHYAANHK (124 aa). C114, C186, H198, C202, C209, C214, H226, and H231 together coordinate Zn(2+).

This sequence belongs to the SINA (Seven in absentia) family.

It catalyses the reaction S-ubiquitinyl-[E2 ubiquitin-conjugating enzyme]-L-cysteine + [acceptor protein]-L-lysine = [E2 ubiquitin-conjugating enzyme]-L-cysteine + N(6)-ubiquitinyl-[acceptor protein]-L-lysine.. It functions in the pathway protein modification; protein ubiquitination. E3 ubiquitin-protein ligase that mediates ubiquitination and subsequent proteasomal degradation of target proteins. E3 ubiquitin ligases accept ubiquitin from an E2 ubiquitin-conjugating enzyme in the form of a thioester and then directly transfers the ubiquitin to targeted substrates. It probably triggers the ubiquitin-mediated degradation of different substrates. The protein is E3 ubiquitin-protein ligase SINA-like 1 of Arabidopsis thaliana (Mouse-ear cress).